We begin with the raw amino-acid sequence, 307 residues long: MASNIRIIFYGTGGSWPTPLRAMPGVGVKIDDVLNLFDCGEGTQKQIMKSSTSFMDIDNIFITHFHGDHFLGLLGLVQSMSFNNRTKQLNIFGPHGAIKILSNALNVGYYTLHFPLKIYELEPDRTYDLGKFLIRTMLNDHPVPALSYSIEERDLVRIDPEKAREKNIPSRIIEKIRENGSYVYKGNEYRIDDIAGGVRKGRRIVYTGDTRPMDRMIEFARNADVLIHDTTTDSSFEPMVNEFGHSSSRQAARIARQARVGRLYLYHYSPRITDTSVLLEDARKEFQETYESKDLMEYEVKVRRDVD.

7 residues coordinate Zn(2+): His64, His66, Asp68, His69, His141, Asp209, and His267. Residue Asp68 is the Proton acceptor of the active site.

Belongs to the RNase Z family. Homodimer. The cofactor is Zn(2+).

The enzyme catalyses Endonucleolytic cleavage of RNA, removing extra 3' nucleotides from tRNA precursor, generating 3' termini of tRNAs. A 3'-hydroxy group is left at the tRNA terminus and a 5'-phosphoryl group is left at the trailer molecule.. Functionally, zinc phosphodiesterase, which displays some tRNA 3'-processing endonuclease activity. Probably involved in tRNA maturation, by removing a 3'-trailer from precursor tRNA. In Thermoplasma acidophilum (strain ATCC 25905 / DSM 1728 / JCM 9062 / NBRC 15155 / AMRC-C165), this protein is Ribonuclease Z.